The chain runs to 515 residues: UPF0053 protein BUsg_314 (515 aa).

7 helical membrane-spanning segments follow: residues 14–34, 49–69, 79–99, 125–145, 150–170, 185–205, and 207–227; these read LTLVVLEVVLGIDNLIFVAIL, IGLGLALIMRLALLSLISWVV, NFFSLSIRDLILLIGGLFLLF, FWAVVIQIVVLDAVFSLDAII, MVNQLLIMMIAVVLATILMLL, VVVLCLSFLLMIGFSLVAEAL, and FYIPKGYLYAAIGFSILIEIF. CBS domains follow at residues 309–368 and 372–432; these read MTPR…NIDV and ASQI…DADE.

This sequence belongs to the UPF0053 family.

It localises to the cell membrane. The sequence is that of UPF0053 protein BUsg_314 from Buchnera aphidicola subsp. Schizaphis graminum (strain Sg).